A 423-amino-acid polypeptide reads, in one-letter code: Sorting nexin-4 (423 aa).

Positions 1-21 (MTDKGKNDLTSKAKDKARGNP) are enriched in basic and acidic residues. Positions 1-25 (MTDKGKNDLTSKAKDKARGNPEKPP) are disordered. Residues 29–157 (EIIVSDPQKR…TFLVSKDWES (129 aa)) form the PX domain. 4 residues coordinate a 1,2-diacyl-sn-glycero-3-phospho-(1D-myo-inositol-3-phosphate): Arg-78, Ser-80, Lys-104, and Arg-123. Coiled-coil stretches lie at residues 217-252 (KKNDSMSEDYTKLGSNLQELQELVTGENEELAAKLK) and 346-381 (SRREKINKLEGKITSLTGELENAKKVADGFEQECLK).

It belongs to the sorting nexin family. As to quaternary structure, forms a complex with ATG20 and ATG17. Binds also to SNC1 and SNX41.

It localises to the cytoplasm. Its subcellular location is the cytosol. The protein resides in the preautophagosomal structure membrane. The protein localises to the endosome membrane. In terms of biological role, sorting nexin, involved in the separation or division of vacuoles throughout the entire life cycle of the cells. Involved in retrieval of late-Golgi SNAREs from post-Golgi endosomes to the trans-Golgi network, for cytoplasm to vacuole transport (Cvt), and autophagy of large cargos including mitophagy, pexophagy and glycophagy. Involved in proper sorting of the v-SNARE protein SNC1. The polypeptide is Sorting nexin-4 (Saccharomyces cerevisiae (strain ATCC 204508 / S288c) (Baker's yeast)).